The primary structure comprises 113 residues: Death-associated protein-like 1.L (113 aa).

The segment at 1-57 (MAKEQKMQSSPQALKAGHLPAVKAGGMRVSKKQGNEENSAPEKNAKKTLQEKPSSVL) is disordered.

This sequence belongs to the DAP-DAPL1 family. Associates with ribosomes; preventing translation. Interacts with eiF5a (eif5a and eif5a2); preventing translation.

In terms of biological role, ribosome-binding protein that promotes ribosome hibernation, a process during which ribosomes are stabilized in an inactive state and preserved from proteasomal degradation. Acts via its association with eiF5a (eif5a and eif5a2) at the polypeptide exit tunnel of the ribosome, preventing mRNA translation. Plays a key role in ribosome hibernation in the mature egg by preventing mRNA translation, leading to ribosome inactivation. Ribosomes, which are produced in large quantities during oogenesis, are stored and translationally repressed in the egg and early embryo. The polypeptide is Death-associated protein-like 1.L (dapl1.L) (Xenopus laevis (African clawed frog)).